A 346-amino-acid chain; its full sequence is Methylthioribose-1-phosphate isomerase (346 aa).

Substrate contacts are provided by residues 48-50 (RGA), arginine 88, and glutamine 192. Catalysis depends on aspartate 233, which acts as the Proton donor. 243–244 (NK) contributes to the substrate binding site.

It belongs to the eIF-2B alpha/beta/delta subunits family. MtnA subfamily.

The catalysed reaction is 5-(methylsulfanyl)-alpha-D-ribose 1-phosphate = 5-(methylsulfanyl)-D-ribulose 1-phosphate. It functions in the pathway amino-acid biosynthesis; L-methionine biosynthesis via salvage pathway; L-methionine from S-methyl-5-thio-alpha-D-ribose 1-phosphate: step 1/6. Functionally, catalyzes the interconversion of methylthioribose-1-phosphate (MTR-1-P) into methylthioribulose-1-phosphate (MTRu-1-P). This is Methylthioribose-1-phosphate isomerase from Alcanivorax borkumensis (strain ATCC 700651 / DSM 11573 / NCIMB 13689 / SK2).